The chain runs to 268 residues: Interleukin-1 alpha (268 aa).

Positions 1 to 112 (MAKVPDLFED…DTEEEIIKPR (112 aa)) are excised as a propeptide. Lys-82 is modified (N6-acetyllysine). The tract at residues 82-86 (KKRRL) is nuclear localization signal (NLS). Residue Ser-87 is modified to Phosphoserine. 2 N-linked (GlcNAc...) asparagine glycosylation sites follow: Asn-102 and Asn-141.

Belongs to the IL-1 family. As to quaternary structure, monomer. Interacts with TMED10; the interaction mediates the translocation from the cytoplasm into the ERGIC (endoplasmic reticulum-Golgi intermediate compartment) and thereby secretion. Interacts with IL1R1. Interacts with S100A13; this interaction is the first step in the export of IL1A, followed by direct translocation of this complex across the plasma membrane. In terms of processing, acetylated within its nuclear localization sequence, which impacts subcellular localization. Proteolytic processed by CAPN1 in a calcium-dependent manner. Cleavage from 31 kDa precursor to 18 kDa biologically active molecules. Post-translationally, phosphorylated. Phosphorylation greatly enhances susceptibility to digestion and promotes the conversion of pre-IL1A alpha to the biologically active IL1A.

Its subcellular location is the nucleus. It localises to the cytoplasm. It is found in the secreted. In terms of biological role, cytokine constitutively present intracellularly in nearly all resting non-hematopoietic cells that plays an important role in inflammation and bridges the innate and adaptive immune systems. After binding to its receptor IL1R1 together with its accessory protein IL1RAP, forms the high affinity interleukin-1 receptor complex. Signaling involves the recruitment of adapter molecules such as MYD88, IRAK1 or IRAK4. In turn, mediates the activation of NF-kappa-B and the three MAPK pathways p38, p42/p44 and JNK pathways. Within the cell, acts as an alarmin and cell death results in its liberation in the extracellular space after disruption of the cell membrane to induce inflammation and alert the host to injury or damage. In addition to its role as a danger signal, which occurs when the cytokine is passively released by cell necrosis, directly senses DNA damage and acts as signal for genotoxic stress without loss of cell integrity. This is Interleukin-1 alpha (IL1A) from Lama glama (Llama).